A 136-amino-acid chain; its full sequence is Secreted RxLR effector protein 63 (136 aa).

A signal peptide spans 1–21 (MQRFPYSLLLLLLSATNRSRR). Positions 43 to 46 (RMLR) match the RxLR motif.

Belongs to the RxLR effector family.

Its subcellular location is the secreted. It localises to the host nucleus. Effector that partially suppresses the tobacco programmed cell death induced by cell death-inducing proteins. This Plasmopara viticola (Downy mildew of grapevine) protein is Secreted RxLR effector protein 63.